We begin with the raw amino-acid sequence, 41 residues long: U15-myrmicitoxin-Tb1b (41 aa).

Residues 1–25 form the signal peptide; the sequence is MKIVKLITIFAMIATLMVTVTNGEA. His40 carries the post-translational modification Histidine amide.

In terms of tissue distribution, expressed by the venom gland.

Its subcellular location is the secreted. Functionally, venom protein with unknown function. Does not induce paralysis when a high dose is administered by intrathoracic injection into the blowfly Lucilia caesar. This chain is U15-myrmicitoxin-Tb1b, found in Tetramorium bicarinatum (Tramp ant).